The primary structure comprises 488 residues: Glutamyl-tRNA(Gln) amidotransferase subunit A (488 aa).

Residues lysine 77 and serine 152 each act as charge relay system in the active site. Serine 176 functions as the Acyl-ester intermediate in the catalytic mechanism.

The protein belongs to the amidase family. GatA subfamily. As to quaternary structure, heterotrimer of A, B and C subunits.

It catalyses the reaction L-glutamyl-tRNA(Gln) + L-glutamine + ATP + H2O = L-glutaminyl-tRNA(Gln) + L-glutamate + ADP + phosphate + H(+). In terms of biological role, allows the formation of correctly charged Gln-tRNA(Gln) through the transamidation of misacylated Glu-tRNA(Gln) in organisms which lack glutaminyl-tRNA synthetase. The reaction takes place in the presence of glutamine and ATP through an activated gamma-phospho-Glu-tRNA(Gln). In Streptococcus pyogenes serotype M5 (strain Manfredo), this protein is Glutamyl-tRNA(Gln) amidotransferase subunit A.